Consider the following 37-residue polypeptide: Cytochrome b6-f complex subunit 5 (37 aa).

A helical transmembrane segment spans residues 5–25 (LLSGIVLGLVPITITGLLVTA).

This sequence belongs to the PetG family. The 4 large subunits of the cytochrome b6-f complex are cytochrome b6, subunit IV (17 kDa polypeptide, PetD), cytochrome f and the Rieske protein, while the 4 small subunits are PetG, PetL, PetM and PetN. The complex functions as a dimer.

The protein resides in the plastid. The protein localises to the chloroplast thylakoid membrane. In terms of biological role, component of the cytochrome b6-f complex, which mediates electron transfer between photosystem II (PSII) and photosystem I (PSI), cyclic electron flow around PSI, and state transitions. PetG is required for either the stability or assembly of the cytochrome b6-f complex. This Tupiella akineta (Green alga) protein is Cytochrome b6-f complex subunit 5.